The chain runs to 182 residues: Ribosome-recycling factor (182 aa).

Belongs to the RRF family.

The protein localises to the cytoplasm. Its function is as follows. Responsible for the release of ribosomes from messenger RNA at the termination of protein biosynthesis. May increase the efficiency of translation by recycling ribosomes from one round of translation to another. The sequence is that of Ribosome-recycling factor from Parasynechococcus marenigrum (strain WH8102).